The chain runs to 97 residues: Large ribosomal subunit protein bL28 (97 aa).

This sequence belongs to the bacterial ribosomal protein bL28 family.

This is Large ribosomal subunit protein bL28 from Nitrobacter winogradskyi (strain ATCC 25391 / DSM 10237 / CIP 104748 / NCIMB 11846 / Nb-255).